The chain runs to 523 residues: Rho guanine nucleotide exchange factor 8 (523 aa).

Positions 44–57 (VESNTPESQNSDSF) are enriched in polar residues. Disordered stretches follow at residues 44-83 (VESNTPESQNSDSFVESPVESSLPMISPLTRPGKRSERQQ) and 442-523 (ETSD…KDRH). In terms of domain architecture, PRONE spans 76-440 (GKRSERQQAD…TLALKQTLLA (365 aa)). A compositionally biased stretch (basic and acidic residues) spans 465–475 (EAEKHDPHSKT).

As to quaternary structure, homodimer. The homodimer interacts with ARAC5/ROP4. Interacts with ARAC11/ROP1 and ARAC10/ROP11. Interacts with PRK6. In terms of tissue distribution, expressed in pollen grains and pollen tubes.

The protein localises to the cell membrane. Guanine-nucleotide exchange factor (GEF) that acts as an activator of Rop (Rho of plants) GTPases by promoting the exchange of GDP for GTP. Active as homodimer. This Arabidopsis thaliana (Mouse-ear cress) protein is Rho guanine nucleotide exchange factor 8.